A 116-amino-acid chain; its full sequence is Carbohydrate-binding protein AQN-3 (116 aa).

A disulfide bridge links Cys-9 with Cys-30. The CUB domain occupies 9-110; it reads CGGFLKNYSG…SSFNVYFYGI (102 aa). Asn-50 is a glycosylation site (N-linked (GlcNAc...) asparagine). The cysteines at positions 53 and 74 are disulfide-linked. A Methylhistidine modification is found at His-85.

This sequence belongs to the spermadhesin family. In terms of processing, the residue at position 85 was identified as a methylhistidine by mass spectrometry.

The protein resides in the secreted. Its function is as follows. AQN proteins mediate the binding of boar spermatozoa to component(s) of the egg's zona pellucida by a carbohydrate-binding mechanism. AQN proteins are secretory components of the male accessory glands being coated to the sperm surface at the time of ejaculation. They possess as well heparin-, serine-protease-inhibitor-binding capability. The protein is Carbohydrate-binding protein AQN-3 of Sus scrofa (Pig).